The chain runs to 282 residues: Bis(5'-nucleosyl)-tetraphosphatase, symmetrical (282 aa).

This sequence belongs to the Ap4A hydrolase family.

It catalyses the reaction P(1),P(4)-bis(5'-adenosyl) tetraphosphate + H2O = 2 ADP + 2 H(+). Hydrolyzes diadenosine 5',5'''-P1,P4-tetraphosphate to yield ADP. This is Bis(5'-nucleosyl)-tetraphosphatase, symmetrical from Escherichia coli O45:K1 (strain S88 / ExPEC).